Here is a 765-residue protein sequence, read N- to C-terminus: Myotubularin-related protein 10-A (765 aa).

Residues 209–650 enclose the Myotubularin phosphatase domain; that stretch reads FETYSDWDRE…THIKLWKLCY (442 aa).

Belongs to the protein-tyrosine phosphatase family. Non-receptor class myotubularin subfamily.

The sequence is that of Myotubularin-related protein 10-A (mtmr10-a) from Xenopus laevis (African clawed frog).